A 170-amino-acid polypeptide reads, in one-letter code: MDLKKHILNVKDFPIDGIDFKDVTPLLNDADAFAYVIDEMAKFVIECGANVVVAPEARGFLFASAVAYKSHTRFVLVRKPGKLPREVIDIEYTLEYGTNHQQMHKGDIKPGDKVVIIDDVLATGGTIEAIVKLVEMQEGKVEGVSFLIDLPALHDENLLQEYKVQKLVKY.

The protein belongs to the purine/pyrimidine phosphoribosyltransferase family. In terms of assembly, homodimer.

The protein localises to the cytoplasm. It carries out the reaction AMP + diphosphate = 5-phospho-alpha-D-ribose 1-diphosphate + adenine. The protein operates within purine metabolism; AMP biosynthesis via salvage pathway; AMP from adenine: step 1/1. Functionally, catalyzes a salvage reaction resulting in the formation of AMP, that is energically less costly than de novo synthesis. The chain is Adenine phosphoribosyltransferase from Mesoplasma florum (strain ATCC 33453 / NBRC 100688 / NCTC 11704 / L1) (Acholeplasma florum).